The sequence spans 338 residues: MSAKLTDLQLLHELEPVVEKYLNRHLSMHKPWNPHDYIPWSDGKNYYALGGQDWDPDQSKLSDVAQVAMVQNLVTEDNLPSYHREIAMNMGMDGAWGQWVNRWTAEENRHGIALRDYLVVTRSVDPVELEKLRLEVVNRGFSPGQNHQGHYFAESLTDSVLYVSFQELATRISHRNTGKACNDPVADQLMAKISADENLHMIFYRDVSEAAFDLVPNQAMKSLHLILSHFQMPGFQVPEFRRKAVVIAVGGVYDPRIHLDEVVMPVLKKWRIFEREDFTGEGAKLRDELALVIKDLELACDKFEVSKQRQLDREARTGKKVSAHELHKTAGKLAMSRR.

6 residues coordinate Fe cation: glutamate 76, glutamate 107, histidine 110, glutamate 167, glutamate 197, and histidine 200. A compositionally biased stretch (basic and acidic residues) spans 314–328 (EARTGKKVSAHELHK). The tract at residues 314–338 (EARTGKKVSAHELHKTAGKLAMSRR) is disordered.

It belongs to the fatty acid desaturase type 2 family. Homodimer. Fe(2+) is required as a cofactor.

Its subcellular location is the cell surface. Its pathway is lipid metabolism; fatty acid metabolism. May be a desaturase involved in mycobacterial fatty acid biosynthesis. This Mycobacterium tuberculosis (strain CDC 1551 / Oshkosh) protein is Putative acyl-[acyl-carrier-protein] desaturase DesA1 (desA1).